A 402-amino-acid chain; its full sequence is Multidrug resistance protein MdtH (402 aa).

Over 1–12 (MSRVSQARNLGK) the chain is Cytoplasmic. A helical transmembrane segment spans residues 13-33 (YFLLIDNMLVVLGFFVVFPLI). Topologically, residues 34–98 (SIRFVDQMGW…GFATMGIAHE (65 aa)) are periplasmic. Residues 99 to 116 (PWLLWFSCLLSGLGGTLF) traverse the membrane as a helical segment. The Cytoplasmic portion of the chain corresponds to 117–138 (DPPRSALVVKLIRPQQRGRFFS). Residues 139–159 (LLMMQDSAGAVIGALLGSWLL) traverse the membrane as a helical segment. Topologically, residues 160 to 164 (QYDFR) are periplasmic. Residues 165 to 185 (LVCATGAVLFVLCAAFNAWLL) traverse the membrane as a helical segment. Residues 186–213 (PAWKLSTVRTPVREGMTRVMRDKRFVTY) lie on the Cytoplasmic side of the membrane. The helical transmembrane segment at 214-234 (VLTLAGYYMLAVQVMLMLPIM) threads the bilayer. The Periplasmic segment spans residues 235–243 (VNDVAGAPS). A helical transmembrane segment spans residues 244–264 (AVKWMYAIEACLSLTLLYPIA). Residues 265 to 276 (RWSEKHFRLEHR) lie on the Cytoplasmic side of the membrane. A helical membrane pass occupies residues 277 to 297 (LMAGLLIMSLSMMPVGMVSGL). Topologically, residues 298–299 (QQ) are periplasmic. The chain crosses the membrane as a helical span at residues 300 to 320 (LFNLICLFYIGSIIAEPARET). The Cytoplasmic portion of the chain corresponds to 321 to 339 (LSASLADARARGSYMGFSR). Residues 340-360 (LGLAIGGAIGYIGGGWLFDLG) traverse the membrane as a helical segment. Residues 361–367 (KSAHQPE) lie on the Periplasmic side of the membrane. Residues 368–388 (LPWMMLGIIGIFTFLALGWQF) form a helical membrane-spanning segment. At 389 to 402 (SQKRAARRLLERDA) the chain is on the cytoplasmic side.

Belongs to the major facilitator superfamily. DHA1 family. MdtH (TC 2.A.1.2.21) subfamily.

The protein resides in the cell inner membrane. Confers resistance to norfloxacin and enoxacin. The sequence is that of Multidrug resistance protein MdtH from Escherichia coli O9:H4 (strain HS).